A 532-amino-acid polypeptide reads, in one-letter code: Cocaine esterase (532 aa).

A Pyrrolidone carboxylic acid modification is found at Gln-1. A disulfide bridge links Cys-69 with Cys-96. The active-site Acyl-ester intermediate is Ser-201. The N-linked (GlcNAc...) asparagine glycan is linked to Asn-249. An intrachain disulfide couples Cys-253 to Cys-264. Residues Glu-318 and His-430 each act as charge relay system in the active site. Positions 529–532 (HTEL) match the Prevents secretion from ER motif.

The protein belongs to the type-B carboxylesterase/lipase family. In terms of assembly, monomer.

Its subcellular location is the endoplasmic reticulum lumen. The enzyme catalyses a carboxylic ester + H2O = an alcohol + a carboxylate + H(+). It catalyses the reaction cocaine + H2O = ecgonine methyl ester + benzoate + H(+). The catalysed reaction is 2-(5Z,8Z,11Z,14Z-eicosatetraenoyl)-glycerol + H2O = glycerol + (5Z,8Z,11Z,14Z)-eicosatetraenoate + H(+). It carries out the reaction prostaglandin E2 1-glyceryl ester + H2O = prostaglandin E2 + glycerol + H(+). The enzyme catalyses prostaglandin F2alpha 1-glyceryl ester + H2O = prostaglandin F2alpha + glycerol + H(+). In terms of biological role, involved in the detoxification of xenobiotics and in the activation of ester and amide prodrugs. Converts monoacylglycerides to free fatty acids and glycerol. Hydrolyzes of 2-arachidonoylglycerol and prostaglandins. This chain is Cocaine esterase (CES2), found in Oryctolagus cuniculus (Rabbit).